Consider the following 622-residue polypeptide: MTPEDYLKKRLDPEQFEKIKGIDNPELNEFLAKYIELLNPARVFICTDSKEDENYIRRRAIEYGEEKSLAMEGHTIHYDGYYDQARDKARTKILVPKGVEIPFINTMDREKGLKEIHEIMKDIAKGKELFVCFFVLGPKNSVFTIPAVQLTDSAYVAHSEFILYRKGYEEFKRLGREAKFLKFVHSAGELDERKTSKNIDKRRVYIDLEGETVYSANTQYGGNTIGLKKLAFRLTIKRAVEEGWLSEHMFLMRINGPNGRKTYFTGAYPSMCGKTSTAMISWENIVGDDLTFIVDMKGEARGANVEKGVFGIIQGVNQEDDPIIWEVLHSPNEIIFSNVLVKDGKPYWNEMGIPIPDEGENHSGKWWRGKKDSEGNEISPSHKNARFTVSLDAFPNTDLEALETPCGVRVGGMIFGGRDADTWPPVREAFDWAHGVITMGAALESETTAATLGKEGVRAFNPMAILDFLSVHIGKYLKNYLEFEKKLRIKPKIFAVNYFLREKDGKWLNHKLDKSVWLKWMELRVHGDVDAIKTPVGYIPKYEDLKRLFKEVLNKDYSREDYEKQFVIRVPEFLAKIERIEKIYRDVGNIPEELFKVLEEERHRLIEAKEKYGDYISPFKFL.

Residues R86 and 220 to 222 contribute to the substrate site; that span reads YGG. 2 residues coordinate Mn(2+): K229 and H248. Residue S270 coordinates substrate. 271–276 provides a ligand contact to GTP; the sequence is MCGKTS. C272 is a catalytic residue. Mn(2+) is bound at residue D289. The segment covering 360 to 374 has biased composition (basic and acidic residues); it reads ENHSGKWWRGKKDSE. The segment at 360–381 is disordered; it reads ENHSGKWWRGKKDSEGNEISPS. 384-386 lines the substrate pocket; it reads NAR. GTP contacts are provided by R386 and R418.

Belongs to the phosphoenolpyruvate carboxykinase [GTP] family. Mn(2+) serves as cofactor.

The protein localises to the cytoplasm. It carries out the reaction oxaloacetate + GTP = phosphoenolpyruvate + GDP + CO2. It functions in the pathway carbohydrate biosynthesis; gluconeogenesis. Its function is as follows. Catalyzes the conversion of oxaloacetate (OAA) to phosphoenolpyruvate (PEP), the rate-limiting step in the metabolic pathway that produces glucose from lactate and other precursors derived from the citric acid cycle. The chain is Phosphoenolpyruvate carboxykinase [GTP] from Thermococcus sibiricus (strain DSM 12597 / MM 739).